Reading from the N-terminus, the 236-residue chain is Purine nucleoside phosphorylase DeoD-type (236 aa).

Position 5 (histidine 5) interacts with a purine D-ribonucleoside. Residues glycine 21, arginine 25, arginine 44, and 88 to 91 (RVGT) contribute to the phosphate site. Residues 180 to 182 (DME) and 204 to 205 (SD) contribute to the a purine D-ribonucleoside site. Aspartate 205 acts as the Proton donor in catalysis.

It belongs to the PNP/UDP phosphorylase family. Homohexamer; trimer of homodimers.

It catalyses the reaction a purine D-ribonucleoside + phosphate = a purine nucleobase + alpha-D-ribose 1-phosphate. The catalysed reaction is a purine 2'-deoxy-D-ribonucleoside + phosphate = a purine nucleobase + 2-deoxy-alpha-D-ribose 1-phosphate. Its function is as follows. Catalyzes the reversible phosphorolytic breakdown of the N-glycosidic bond in the beta-(deoxy)ribonucleoside molecules, with the formation of the corresponding free purine bases and pentose-1-phosphate. The sequence is that of Purine nucleoside phosphorylase DeoD-type from Buchnera aphidicola subsp. Schizaphis graminum (strain Sg).